The following is a 152-amino-acid chain: Superoxide dismutase [Cu-Zn] 2 (152 aa).

The Cu cation site is built by H45, H47, and H62. The cysteines at positions 56 and 145 are disulfide-linked. H62, H70, H79, and D82 together coordinate Zn(2+). H119 is a Cu cation binding site.

Belongs to the Cu-Zn superoxide dismutase family. Homodimer. It depends on Cu cation as a cofactor. Zn(2+) is required as a cofactor.

It is found in the cytoplasm. The enzyme catalyses 2 superoxide + 2 H(+) = H2O2 + O2. Functionally, destroys radicals which are normally produced within the cells and which are toxic to biological systems. The protein is Superoxide dismutase [Cu-Zn] 2 (SODCC2) of Oryza sativa subsp. japonica (Rice).